Reading from the N-terminus, the 47-residue chain is Defensin-like protein 2 (47 aa).

Disulfide bonds link cysteine 3-cysteine 47, cysteine 14-cysteine 36, cysteine 20-cysteine 41, and cysteine 24-cysteine 43.

This sequence belongs to the DEFL family.

This Zea mays (Maize) protein is Defensin-like protein 2.